The primary structure comprises 232 residues: Octanoyltransferase (232 aa).

Residues 32–219 (NIIYDTLILL…SFKVFNFSSY (188 aa)) enclose the BPL/LPL catalytic domain. Residues 77 to 84 (RGGDITYH), 140 to 142 (AIG), and 153 to 155 (GFA) each bind substrate. The active-site Acyl-thioester intermediate is C171.

It belongs to the LipB family.

It is found in the cytoplasm. It carries out the reaction octanoyl-[ACP] + L-lysyl-[protein] = N(6)-octanoyl-L-lysyl-[protein] + holo-[ACP] + H(+). It participates in protein modification; protein lipoylation via endogenous pathway; protein N(6)-(lipoyl)lysine from octanoyl-[acyl-carrier-protein]: step 1/2. Functionally, catalyzes the transfer of endogenously produced octanoic acid from octanoyl-acyl-carrier-protein onto the lipoyl domains of lipoate-dependent enzymes. Lipoyl-ACP can also act as a substrate although octanoyl-ACP is likely to be the physiological substrate. The protein is Octanoyltransferase of Dictyoglomus turgidum (strain DSM 6724 / Z-1310).